Reading from the N-terminus, the 61-residue chain is Small ribosomal subunit protein uS14 (61 aa).

Zn(2+) is bound by residues Cys-24, Cys-27, Cys-40, and Cys-43.

This sequence belongs to the universal ribosomal protein uS14 family. Zinc-binding uS14 subfamily. Part of the 30S ribosomal subunit. Contacts proteins S3 and S10. The cofactor is Zn(2+).

Its function is as follows. Binds 16S rRNA, required for the assembly of 30S particles and may also be responsible for determining the conformation of the 16S rRNA at the A site. The polypeptide is Small ribosomal subunit protein uS14 (Bacillus anthracis (strain A0248)).